A 136-amino-acid polypeptide reads, in one-letter code: 2-hydroxyisobutanoyl-CoA mutase small subunit (136 aa).

The region spanning 5-133 (PIRVLLAKVG…DSIRSLVAAR (129 aa)) is the B12-binding domain. Histidine 18 provides a ligand contact to adenosylcob(III)alamin.

The protein belongs to the acyl-CoA mutase small subunit family. In terms of assembly, homotetramer composed of two large substrate-binding subunits (HcmA) and two small cobalamin-binding subunits (HcmB). Adenosylcob(III)alamin serves as cofactor.

The catalysed reaction is 2-hydroxyisobutanoyl-CoA = (3S)-3-hydroxybutanoyl-CoA. In terms of biological role, together with HcmA, catalyzes the isomerization of 2-hydroxyisobutyryl-CoA and 3-hydroxybutyryl-CoA. Is specific for 2-hydroxyisobutyryl-CoA and (S)-3-hydroxybutyryl-CoA, and shows only very low activity with (R)-3-hydroxybutyryl-CoA, isobutyryl-CoA and butyryl-CoA. In vitro, can isomerize pivalyl-CoA and isovaleryl-CoA, with much lower efficiency. Plays a central role in the degradation of substrates bearing a tert-butyl moiety, such as the fuel oxygenate methyl tert-butyl ether (MTBE) and its metabolites. The polypeptide is 2-hydroxyisobutanoyl-CoA mutase small subunit (Aquincola tertiaricarbonis).